Consider the following 210-residue polypeptide: Thymidylate kinase (210 aa).

14 to 21 (GLDRSGKS) provides a ligand contact to ATP.

The protein belongs to the thymidylate kinase family.

It carries out the reaction dTMP + ATP = dTDP + ADP. The protein operates within pyrimidine metabolism; dTTP biosynthesis. Functionally, catalyzes the conversion of dTMP to dTDP. The sequence is that of Thymidylate kinase (tmp1) from Schizosaccharomyces pombe (strain 972 / ATCC 24843) (Fission yeast).